We begin with the raw amino-acid sequence, 155 residues long: MPNIMEGQLEGRGLKFGIVVSRFNEFITSRLLDGALDALNRHGADPGAIDIAWVPGAFEIPLTAQKMAARGYDAVICLGAVIRGATPHFEYVAAEVTKGIAQVSLNSGVPVIYGLITADNIEQAIERAGTKAGNKGFDAAMTAMEMANLFKVMAR.

5-amino-6-(D-ribitylamino)uracil-binding positions include Phe-23, 57–59, and 80–82; these read AFE and AVI. Position 85–86 (85–86) interacts with (2S)-2-hydroxy-3-oxobutyl phosphate; it reads AT. His-88 functions as the Proton donor in the catalytic mechanism. Residue Tyr-113 coordinates 5-amino-6-(D-ribitylamino)uracil. Residue Arg-127 participates in (2S)-2-hydroxy-3-oxobutyl phosphate binding.

This sequence belongs to the DMRL synthase family.

The enzyme catalyses (2S)-2-hydroxy-3-oxobutyl phosphate + 5-amino-6-(D-ribitylamino)uracil = 6,7-dimethyl-8-(1-D-ribityl)lumazine + phosphate + 2 H2O + H(+). Its pathway is cofactor biosynthesis; riboflavin biosynthesis; riboflavin from 2-hydroxy-3-oxobutyl phosphate and 5-amino-6-(D-ribitylamino)uracil: step 1/2. Functionally, catalyzes the formation of 6,7-dimethyl-8-ribityllumazine by condensation of 5-amino-6-(D-ribitylamino)uracil with 3,4-dihydroxy-2-butanone 4-phosphate. This is the penultimate step in the biosynthesis of riboflavin. The sequence is that of 6,7-dimethyl-8-ribityllumazine synthase from Moorella thermoacetica (strain ATCC 39073 / JCM 9320).